The following is a 155-amino-acid chain: Small ribosomal subunit protein uS7 (155 aa).

The protein belongs to the universal ribosomal protein uS7 family. In terms of assembly, part of the 30S ribosomal subunit. Contacts proteins S9 and S11.

One of the primary rRNA binding proteins, it binds directly to 16S rRNA where it nucleates assembly of the head domain of the 30S subunit. Is located at the subunit interface close to the decoding center, probably blocks exit of the E-site tRNA. The polypeptide is Small ribosomal subunit protein uS7 (Corynebacterium aurimucosum (strain ATCC 700975 / DSM 44827 / CIP 107346 / CN-1) (Corynebacterium nigricans)).